A 215-amino-acid polypeptide reads, in one-letter code: Pyridoxine/pyridoxamine 5'-phosphate oxidase (215 aa).

Substrate is bound by residues 9–12 and lysine 69; that span reads RRDY. Residues 64–69, 79–80, lysine 86, and glutamine 108 each bind FMN; these read RVLLLK and FS. 3 residues coordinate substrate: tyrosine 126, arginine 130, and serine 134. FMN-binding positions include 143–144 and tryptophan 188; that span reads QS. 194–196 is a substrate binding site; it reads RLH. Arginine 198 serves as a coordination point for FMN.

Belongs to the pyridoxamine 5'-phosphate oxidase family. As to quaternary structure, homodimer. FMN is required as a cofactor.

It carries out the reaction pyridoxamine 5'-phosphate + O2 + H2O = pyridoxal 5'-phosphate + H2O2 + NH4(+). The enzyme catalyses pyridoxine 5'-phosphate + O2 = pyridoxal 5'-phosphate + H2O2. It participates in cofactor metabolism; pyridoxal 5'-phosphate salvage; pyridoxal 5'-phosphate from pyridoxamine 5'-phosphate: step 1/1. The protein operates within cofactor metabolism; pyridoxal 5'-phosphate salvage; pyridoxal 5'-phosphate from pyridoxine 5'-phosphate: step 1/1. In terms of biological role, catalyzes the oxidation of either pyridoxine 5'-phosphate (PNP) or pyridoxamine 5'-phosphate (PMP) into pyridoxal 5'-phosphate (PLP). The polypeptide is Pyridoxine/pyridoxamine 5'-phosphate oxidase (Azotobacter vinelandii (strain DJ / ATCC BAA-1303)).